Here is a 324-residue protein sequence, read N- to C-terminus: O-ureido-L-serine synthase (324 aa).

At Lys43 the chain carries N6-(pyridoxal phosphate)lysine. Pyridoxal 5'-phosphate is bound by residues Asn73, 177–181 (GTTGT), and Ser265.

This sequence belongs to the cysteine synthase/cystathionine beta-synthase family. As to quaternary structure, homotetramer. It depends on pyridoxal 5'-phosphate as a cofactor.

It catalyses the reaction hydroxyurea + O-acetyl-L-serine = O-ureido-L-serine + acetate + H(+). The catalysed reaction is O-acetyl-L-serine + hydrogen sulfide = L-cysteine + acetate. Its function is as follows. Involved in the biosynthesis of the antibiotic D-cycloserine (DCS), a cyclic structural analog of D-alanine, used as an antitubercular agent. Catalyzes the addition of hydroxyurea on O-acetyl-L-serine (OAS) to yield O-ureido-L-serine. It prefers sulfide as the second substrate, followed by hydroxyurea, L-homocysteine, and thiosulfate. The chain is O-ureido-L-serine synthase from Streptomyces lavendulae.